The sequence spans 300 residues: tRNA dimethylallyltransferase (300 aa).

9-16 (GPTASGKS) contacts ATP. Residue 11–16 (TASGKS) coordinates substrate. Residues 34 to 37 (DSKQ) are interaction with substrate tRNA.

The protein belongs to the IPP transferase family. As to quaternary structure, monomer. Requires Mg(2+) as cofactor.

The catalysed reaction is adenosine(37) in tRNA + dimethylallyl diphosphate = N(6)-dimethylallyladenosine(37) in tRNA + diphosphate. Its function is as follows. Catalyzes the transfer of a dimethylallyl group onto the adenine at position 37 in tRNAs that read codons beginning with uridine, leading to the formation of N6-(dimethylallyl)adenosine (i(6)A). The polypeptide is tRNA dimethylallyltransferase (Ehrlichia canis (strain Jake)).